The following is a 1357-amino-acid chain: DNA-directed RNA polymerase subunit beta (1357 aa).

This sequence belongs to the RNA polymerase beta chain family. The RNAP catalytic core consists of 2 alpha, 1 beta, 1 beta' and 1 omega subunit. When a sigma factor is associated with the core the holoenzyme is formed, which can initiate transcription.

The enzyme catalyses RNA(n) + a ribonucleoside 5'-triphosphate = RNA(n+1) + diphosphate. Its function is as follows. DNA-dependent RNA polymerase catalyzes the transcription of DNA into RNA using the four ribonucleoside triphosphates as substrates. In Pseudomonas fluorescens (strain Pf0-1), this protein is DNA-directed RNA polymerase subunit beta.